The chain runs to 361 residues: Replication-associated protein (361 aa).

The CRESS-DNA virus Rep endonuclease domain occupies 8-116 (AINAKNYFLT…DGDVLDHGSF (109 aa)). The short motif at 15–18 (FLTY) is the RCR-1 element. 3 residues coordinate a divalent metal cation: Glu49, His57, and His59. The RCR-2 motif lies at 57-59 (HLH). Tyr103 (for DNA cleavage activity) is an active-site residue. The short motif at 103–106 (YMDK) is the RCR-3 element. Residue Asp107 coordinates a divalent metal cation. The binding to RBR1 stretch occupies residues 143–153 (KLQALNILREK). The interval 156 to 176 (KDYILQFHNLNCNLSRIFADD) is oligomerization. ATP is bound at residue 220-227 (GDSRTGKT).

This sequence belongs to the geminiviridae Rep protein family. As to quaternary structure, homooligomer. Interacts with the replication enhancer protein (REn). Interacts with host retinoblastoma-related protein 1 (RBR1), and may thereby induce the transcription of host replicative enzymes even if the cell is not dividing anymore. Interacts with host PCNA. Interacts with host SCE1 protein. Binds to host RAD54 protein to ensure geminiviral replication. Requires Mg(2+) as cofactor. Mn(2+) serves as cofactor.

The protein localises to the host nucleus. In terms of biological role, essential for the replication of viral ssDNA. The closed circular ssDNA genome is first converted to a superhelical dsDNA. Rep binds a specific region at the genome origin of replication. It introduces an endonucleolytic nick within the conserved sequence 5'-TAATATTAC-3' in the intergenic region of the genome present in all geminiviruses, thereby initiating the rolling circle replication (RCR). Following cleavage, binds covalently to the 5'-phosphate of DNA as a tyrosyl ester. The cleavage gives rise to a free 3'-OH that serves as a primer for the cellular DNA polymerase. The polymerase synthesizes the (+) strand DNA by rolling circle mechanism. After one round of replication, a Rep-catalyzed nucleotidyl transfer reaction releases a circular single-stranded virus genome, thereby terminating the replication. Displays origin-specific DNA cleavage, nucleotidyl transferase, ATPase and helicase activities. This is Replication-associated protein from Mungbean yellow mosaic virus (strain Vigna) (MYMV).